The primary structure comprises 414 residues: Transforming growth factor beta-2 proprotein (414 aa).

A signal peptide spans 1–19 (MHYCVLSAFLILHLVTVAL). Residues Asn72, Asn140, and Asn241 are each glycosylated (N-linked (GlcNAc...) asparagine). 4 disulfides stabilise this stretch: Cys309–Cys318, Cys317–Cys380, Cys346–Cys411, and Cys350–Cys413.

Belongs to the TGF-beta family. Interacts with the serine proteases, HTRA1 and HTRA3. Interacts with ASPN. Interacts with MFAP5. As to quaternary structure, interacts with Transforming growth factor beta-2 (TGF-beta-2) chain; interaction is non-covalent and maintains (TGF-beta-2) in a latent state. Interacts with LRRC32/GARP; leading to regulate activation of TGF-beta-2. Interacts with NREP; the interaction results in a decrease in TGFB2 autoinduction. In terms of assembly, transforming growth factor beta-2: Homodimer; disulfide-linked. Transforming growth factor beta-2: Interacts with TGF-beta receptors (TGFBR1 and TGFBR2), leading to signal transduction. In terms of processing, the precursor proprotein is cleaved in the Golgi apparatus to form Transforming growth factor beta-2 (TGF-beta-2) and Latency-associated peptide (LAP) chains, which remain non-covalently linked, rendering TGF-beta-2 inactive.

The protein resides in the secreted. It localises to the extracellular space. The protein localises to the extracellular matrix. Precursor of the Latency-associated peptide (LAP) and Transforming growth factor beta-2 (TGF-beta-2) chains, which constitute the regulatory and active subunit of TGF-beta-2, respectively. In terms of biological role, required to maintain the Transforming growth factor beta-2 (TGF-beta-2) chain in a latent state during storage in extracellular matrix. Associates non-covalently with TGF-beta-2 and regulates its activation via interaction with 'milieu molecules', such as LTBP1 and LRRC32/GARP, that control activation of TGF-beta-2. Functionally, multifunctional protein that regulates various processes such as angiogenesis and heart development. Activation into mature form follows different steps: following cleavage of the proprotein in the Golgi apparatus, Latency-associated peptide (LAP) and Transforming growth factor beta-2 (TGF-beta-2) chains remain non-covalently linked rendering TGF-beta-2 inactive during storage in extracellular matrix. At the same time, LAP chain interacts with 'milieu molecules', such as LTBP1 and LRRC32/GARP, that control activation of TGF-beta-2 and maintain it in a latent state during storage in extracellular milieus. Once activated following release of LAP, TGF-beta-2 acts by binding to TGF-beta receptors (TGFBR1 and TGFBR2), which transduce signal. The protein is Transforming growth factor beta-2 proprotein (TGFB2) of Chlorocebus aethiops (Green monkey).